A 168-amino-acid chain; its full sequence is Translationally-controlled tumor protein homolog (168 aa).

One can recognise a TCTP domain in the interval 1–168; it reads MLLYKDVISG…FKDGLVSEKF (168 aa). Residue serine 78 is modified to Phosphoserine.

Belongs to the TCTP family.

It localises to the cytoplasm. Its function is as follows. Involved in calcium binding and microtubule stabilization. May be a guanine nucleotide-free chaperone (GFC). The polypeptide is Translationally-controlled tumor protein homolog (p23fy) (Schizosaccharomyces pombe (strain 972 / ATCC 24843) (Fission yeast)).